A 547-amino-acid chain; its full sequence is Cytochrome P450 monooxygenase 81 (547 aa).

Helical transmembrane passes span 6–23 (IPTQ…LFLL) and 106–124 (AFFA…ATAG). Cys-483 contacts heme. 2 N-linked (GlcNAc...) asparagine glycosylation sites follow: Asn-503 and Asn-516.

Belongs to the cytochrome P450 family. Requires heme as cofactor.

It localises to the membrane. The protein operates within secondary metabolite biosynthesis. Functionally, cytochrome P450 monooxygenase that is able to use dehydroabietic acid as a substrate for oxidation. In Postia placenta (strain ATCC 44394 / Madison 698-R) (Brown rot fungus), this protein is Cytochrome P450 monooxygenase 81.